Reading from the N-terminus, the 238-residue chain is Ubiquinone biosynthesis O-methyltransferase (238 aa).

4 residues coordinate S-adenosyl-L-methionine: arginine 40, glycine 59, aspartate 81, and methionine 126.

It belongs to the methyltransferase superfamily. UbiG/COQ3 family.

It catalyses the reaction a 3-demethylubiquinol + S-adenosyl-L-methionine = a ubiquinol + S-adenosyl-L-homocysteine + H(+). It carries out the reaction a 3-(all-trans-polyprenyl)benzene-1,2-diol + S-adenosyl-L-methionine = a 2-methoxy-6-(all-trans-polyprenyl)phenol + S-adenosyl-L-homocysteine + H(+). Its pathway is cofactor biosynthesis; ubiquinone biosynthesis. In terms of biological role, O-methyltransferase that catalyzes the 2 O-methylation steps in the ubiquinone biosynthetic pathway. This Neisseria meningitidis serogroup A / serotype 4A (strain DSM 15465 / Z2491) protein is Ubiquinone biosynthesis O-methyltransferase.